The primary structure comprises 323 residues: Beta-ketoacyl-[acyl-carrier-protein] synthase III (323 aa).

Active-site residues include cysteine 113 and histidine 250. The tract at residues 251–255 (QANKR) is ACP-binding. Residue asparagine 280 is part of the active site.

The protein belongs to the thiolase-like superfamily. FabH family. Homodimer.

It is found in the cytoplasm. It carries out the reaction malonyl-[ACP] + acetyl-CoA + H(+) = 3-oxobutanoyl-[ACP] + CO2 + CoA. It functions in the pathway lipid metabolism; fatty acid biosynthesis. Its function is as follows. Catalyzes the condensation reaction of fatty acid synthesis by the addition to an acyl acceptor of two carbons from malonyl-ACP. Catalyzes the first condensation reaction which initiates fatty acid synthesis and may therefore play a role in governing the total rate of fatty acid production. Possesses both acetoacetyl-ACP synthase and acetyl transacylase activities. Its substrate specificity determines the biosynthesis of branched-chain and/or straight-chain of fatty acids. In Mesorhizobium japonicum (strain LMG 29417 / CECT 9101 / MAFF 303099) (Mesorhizobium loti (strain MAFF 303099)), this protein is Beta-ketoacyl-[acyl-carrier-protein] synthase III.